Here is a 92-residue protein sequence, read N- to C-terminus: DNA/RNA-binding protein Alba (92 aa).

Residue Lys11 is modified to N6-acetyllysine.

The protein belongs to the histone-like Alba family. In terms of processing, acetylated. Acetylation at Lys-11 decreases DNA-binding affinity.

It is found in the cytoplasm. Its subcellular location is the chromosome. Binds double-stranded DNA tightly but without sequence specificity. Involved in DNA compaction. This is DNA/RNA-binding protein Alba from Pyrobaculum aerophilum (strain ATCC 51768 / DSM 7523 / JCM 9630 / CIP 104966 / NBRC 100827 / IM2).